A 282-amino-acid chain; its full sequence is Putative SWIB domain-containing protein 070L (282 aa).

Residues 1–16 (MFQTTPKQVKPTTVPK) are compositionally biased toward low complexity. Residues 1 to 21 (MFQTTPKQVKPTTVPKTGRKN) are disordered. Positions 97–181 (GLEKPRMISE…QKYLKHCFDE (85 aa)) constitute an SWIB/MDM2 domain. Residues 199-282 (TDDQTTAEEA…KVKKEHKIKK (84 aa)) are disordered. Positions 262 to 275 (GKKDKENIPLEKVK) are enriched in basic and acidic residues.

The protein belongs to the IIV-6 306R family.

This is Putative SWIB domain-containing protein 070L from Invertebrate iridescent virus 3 (IIV-3).